Here is a 264-residue protein sequence, read N- to C-terminus: Zinc import ATP-binding protein ZnuC (264 aa).

Positions 11–226 (IELKGVNVTF…PVFIRFFGNQ (216 aa)) constitute an ABC transporter domain. 43–50 (GPNGGGKS) is an ATP binding site.

It belongs to the ABC transporter superfamily. Zinc importer (TC 3.A.1.15.5) family. The complex is composed of two ATP-binding proteins (ZnuC), two transmembrane proteins (ZnuB) and a solute-binding protein (ZnuA).

The protein resides in the cell inner membrane. The catalysed reaction is Zn(2+)(out) + ATP(in) + H2O(in) = Zn(2+)(in) + ADP(in) + phosphate(in) + H(+)(in). In terms of biological role, part of the ABC transporter complex ZnuABC involved in zinc import. Responsible for energy coupling to the transport system. This is Zinc import ATP-binding protein ZnuC from Histophilus somni (strain 129Pt) (Haemophilus somnus).